The sequence spans 484 residues: Monocarboxylate transporter 2 (484 aa).

Residues M1 to D16 lie on the Cytoplasmic side of the membrane. The helical transmembrane segment at G17–F37 threads the bilayer. The Extracellular segment spans residues P38–A60. The helical transmembrane segment at W61–V81 threads the bilayer. The Cytoplasmic segment spans residues N82–R87. Residues P88–N108 form a helical membrane-spanning segment. The Extracellular segment spans residues S109–T116. Residues I117–G137 form a helical membrane-spanning segment. At K138 to R144 the chain is on the cytoplasmic side. The helical transmembrane segment at P145–F165 threads the bilayer. The Extracellular portion of the chain corresponds to N166–G174. Residues W175–L195 traverse the membrane as a helical segment. Residues M196–G245 are Cytoplasmic-facing. The tract at residues T201–S224 is disordered. A helical membrane pass occupies residues F246–F266. Topologically, residues L267–A282 are extracellular. The chain crosses the membrane as a helical span at residues L283–A303. The Cytoplasmic segment spans residues N304–R311. A helical transmembrane segment spans residues I312–L332. Topologically, residues A333–P337 are extracellular. The chain crosses the membrane as a helical span at residues A338 to F358. Residues E359 to S372 lie on the Cytoplasmic side of the membrane. A helical transmembrane segment spans residues A373 to G393. At K394–M405 the chain is on the extracellular side. The chain crosses the membrane as a helical span at residues Y406–I426. At N427–I484 the chain is on the cytoplasmic side. The disordered stretch occupies residues R437–I484. 2 stretches are compositionally biased toward basic and acidic residues: residues P449 to S465 and P475 to I484.

The protein belongs to the major facilitator superfamily. Monocarboxylate porter (TC 2.A.1.13) family. As to quaternary structure, homodimer. Interacts with GRID2IP. Interacts with EMB; interaction mediates SLC16A7 targeting to the plasma membrane. Interacts with isoform 2 of BSG. Abundant on the surface of hepatocytes. Present on parietal cells of the oxyntic gland of the stomach, on the basolateral surface of epithelial cells in the collecting ducts of the kidney, on sperm tails throughout the epididymis. Expressed in mitochondria-rich skeletal muscle fibers and cardiac myocytes (at protein level).

The protein resides in the cell membrane. The protein localises to the basolateral cell membrane. Its subcellular location is the cytoplasm. It catalyses the reaction pyruvate(out) + H(+)(out) = pyruvate(in) + H(+)(in). It carries out the reaction 3-methyl-2-oxobutanoate(out) + H(+)(out) = 3-methyl-2-oxobutanoate(in) + H(+)(in). The catalysed reaction is (S)-lactate(in) + H(+)(in) = (S)-lactate(out) + H(+)(out). The enzyme catalyses acetoacetate(out) + H(+)(out) = acetoacetate(in) + H(+)(in). It catalyses the reaction (R)-3-hydroxybutanoate(out) + H(+)(out) = (R)-3-hydroxybutanoate(in) + H(+)(in). It carries out the reaction 4-methyl-2-oxopentanoate(out) + H(+)(out) = 4-methyl-2-oxopentanoate(in) + H(+)(in). The catalysed reaction is (S)-3-hydroxybutanoate(out) + H(+)(out) = (S)-3-hydroxybutanoate(in) + H(+)(in). Transport activity exhibits steep dependence on substrate concentration. Substrate concentration sensitivity of SLC16A7 arises from the strong inter-subunit cooperativity of the SLC16A7 dimer during transport. Inhibited by AR-C155858. In terms of biological role, proton-coupled monocarboxylate symporter. Catalyzes the rapid transport across the plasma membrane of monocarboxylates such as L-lactate, pyruvate and ketone bodies, acetoacetate, beta-hydroxybutyrate and acetate. Dimerization is functionally required and both subunits work cooperatively in transporting substrate. The chain is Monocarboxylate transporter 2 (SLC16A7) from Mesocricetus auratus (Golden hamster).